The sequence spans 393 residues: F-box protein KIB4 (393 aa).

Residues 12–59 form the F-box domain; the sequence is AKQPILVLDLVRLVLERLSFVDFHRARCVSSVWYSASKSCIGGTNPTA.

Its subcellular location is the cytoplasm. The protein localises to the nucleus. It is found in the nucleolus. In terms of biological role, component of SCF(ASK-cullin-F-box) E3 ubiquitin ligase complexes, which may mediate the ubiquitination and subsequent proteasomal degradation of target proteins. Required for brassinosteroid (BR) signal transduction. Mediates ASK7/BIN2/SK21 inactivation both by competing with substrate binding (e.g. BZR1) and by promoting its ubiquitination and subsequent proteasomal degradation. The sequence is that of F-box protein KIB4 from Arabidopsis thaliana (Mouse-ear cress).